The primary structure comprises 357 residues: Putative ABC transporter ATP-binding protein MG303 (357 aa).

Residues 72-312 (LFFNNISVFV…TSWLMQYGIT (241 aa)) enclose the ABC transporter domain. Residue 107-114 (GESGSGKT) participates in ATP binding.

Belongs to the ABC transporter superfamily.

In Mycoplasma genitalium (strain ATCC 33530 / DSM 19775 / NCTC 10195 / G37) (Mycoplasmoides genitalium), this protein is Putative ABC transporter ATP-binding protein MG303.